Consider the following 386-residue polypeptide: 3-ketoacyl-CoA thiolase (386 aa).

The active-site Acyl-thioester intermediate is the Cys91. Catalysis depends on proton acceptor residues His342 and Cys372.

It belongs to the thiolase-like superfamily. Thiolase family. In terms of assembly, heterotetramer of two alpha chains (FadB) and two beta chains (FadA).

Its subcellular location is the cytoplasm. It carries out the reaction an acyl-CoA + acetyl-CoA = a 3-oxoacyl-CoA + CoA. The protein operates within lipid metabolism; fatty acid beta-oxidation. Functionally, catalyzes the final step of fatty acid oxidation in which acetyl-CoA is released and the CoA ester of a fatty acid two carbons shorter is formed. In Pseudoalteromonas atlantica (strain T6c / ATCC BAA-1087), this protein is 3-ketoacyl-CoA thiolase.